The chain runs to 348 residues: Probable dual-specificity RNA methyltransferase RlmN (348 aa).

Glu-89 functions as the Proton acceptor in the catalytic mechanism. A Radical SAM core domain is found at 95 to 330 (ERDHYTLCVS…NFVRFSKGVE (236 aa)). An intrachain disulfide couples Cys-102 to Cys-335. Residues Cys-109, Cys-113, and Cys-116 each contribute to the [4Fe-4S] cluster site. Residues 157-158 (GE), Ser-189, 214-216 (SLN), and Asn-292 contribute to the S-adenosyl-L-methionine site. Catalysis depends on Cys-335, which acts as the S-methylcysteine intermediate.

This sequence belongs to the radical SAM superfamily. RlmN family. [4Fe-4S] cluster serves as cofactor.

It localises to the cytoplasm. It carries out the reaction adenosine(2503) in 23S rRNA + 2 reduced [2Fe-2S]-[ferredoxin] + 2 S-adenosyl-L-methionine = 2-methyladenosine(2503) in 23S rRNA + 5'-deoxyadenosine + L-methionine + 2 oxidized [2Fe-2S]-[ferredoxin] + S-adenosyl-L-homocysteine. The catalysed reaction is adenosine(37) in tRNA + 2 reduced [2Fe-2S]-[ferredoxin] + 2 S-adenosyl-L-methionine = 2-methyladenosine(37) in tRNA + 5'-deoxyadenosine + L-methionine + 2 oxidized [2Fe-2S]-[ferredoxin] + S-adenosyl-L-homocysteine. In terms of biological role, specifically methylates position 2 of adenine 2503 in 23S rRNA and position 2 of adenine 37 in tRNAs. In Aquifex aeolicus (strain VF5), this protein is Probable dual-specificity RNA methyltransferase RlmN.